A 258-amino-acid polypeptide reads, in one-letter code: Na(+)-translocating NADH-quinone reductase subunit C (258 aa).

The chain crosses the membrane as a helical span at residues 14–34 (LIVVLAVSLICSVIVAGAVVG). At Ser226 the chain carries FMN phosphoryl serine.

It belongs to the NqrC family. Composed of six subunits; NqrA, NqrB, NqrC, NqrD, NqrE and NqrF. It depends on FMN as a cofactor.

The protein localises to the cell inner membrane. The enzyme catalyses a ubiquinone + n Na(+)(in) + NADH + H(+) = a ubiquinol + n Na(+)(out) + NAD(+). Functionally, NQR complex catalyzes the reduction of ubiquinone-1 to ubiquinol by two successive reactions, coupled with the transport of Na(+) ions from the cytoplasm to the periplasm. NqrA to NqrE are probably involved in the second step, the conversion of ubisemiquinone to ubiquinol. The chain is Na(+)-translocating NADH-quinone reductase subunit C from Neisseria meningitidis serogroup A / serotype 4A (strain DSM 15465 / Z2491).